The chain runs to 129 residues: Small ribosomal subunit protein uS11 (129 aa).

Belongs to the universal ribosomal protein uS11 family. As to quaternary structure, part of the 30S ribosomal subunit. Interacts with proteins S7 and S18. Binds to IF-3.

In terms of biological role, located on the platform of the 30S subunit, it bridges several disparate RNA helices of the 16S rRNA. Forms part of the Shine-Dalgarno cleft in the 70S ribosome. This is Small ribosomal subunit protein uS11 from Methylobacterium radiotolerans (strain ATCC 27329 / DSM 1819 / JCM 2831 / NBRC 15690 / NCIMB 10815 / 0-1).